The following is a 146-amino-acid chain: Early E3 16 kDa glycoprotein (146 aa).

N-linked (GlcNAc...) asparagine; by host glycans are attached at residues asparagine 51 and asparagine 84.

E3 proteins seem to be dispensable for virus growth in tissue culture cells. They are potentially important for virus growth under special conditions; E3 region may help adenoviruses to evade the immune surveillance of the host. This Human adenovirus B serotype 3 (HAdV-3) protein is Early E3 16 kDa glycoprotein.